Reading from the N-terminus, the 152-residue chain is Ribonuclease H (152 aa).

In terms of domain architecture, RNase H type-1 spans 6-147 (KKNRVIAYTD…ADELANKAIA (142 aa)). Mg(2+) contacts are provided by aspartate 15, glutamate 53, aspartate 75, and aspartate 139.

This sequence belongs to the RNase H family. Monomer. Requires Mg(2+) as cofactor.

The protein resides in the cytoplasm. It carries out the reaction Endonucleolytic cleavage to 5'-phosphomonoester.. Its function is as follows. Endonuclease that specifically degrades the RNA of RNA-DNA hybrids. The polypeptide is Ribonuclease H (Francisella tularensis subsp. tularensis (strain FSC 198)).